The chain runs to 444 residues: ATPase PAAT (444 aa).

Phosphoserine is present on residues Ser-177, Ser-182, and Ser-254. A disordered region spans residues 279 to 300; the sequence is SAQPSGEGNTTNHDEGHLMPQN. Residues 280–289 are compositionally biased toward polar residues; sequence AQPSGEGNTT. Position 302 is a phosphoserine (Ser-302). The tract at residues 424–444 is disordered; the sequence is PPPGMPLRHYDSRERLSNGER. The segment covering 431–444 has biased composition (basic and acidic residues); that stretch reads RHYDSRERLSNGER.

As to quaternary structure, homodimer. Interacts with ABCB7, ABCB8/MITOSUR and ABCB10.

It is found in the cytoplasm. The protein resides in the mitochondrion. The enzyme catalyses ATP + H2O = ADP + phosphate + H(+). ATPase that regulates mitochondrial ABC transporters ABCB7, ABCB8/MITOSUR and ABCB10. Regulates mitochondrial ferric concentration and heme biosynthesis and plays a role in the maintenance of mitochondrial homeostasis and cell survival. In Mus musculus (Mouse), this protein is ATPase PAAT.